Consider the following 418-residue polypeptide: Imidazolonepropionase (418 aa).

Positions 79 and 81 each coordinate Fe(3+). 2 residues coordinate Zn(2+): H79 and H81. R88, Y151, and H184 together coordinate 4-imidazolone-5-propanoate. An N-formimidoyl-L-glutamate-binding site is contributed by Y151. Residue H249 participates in Fe(3+) binding. Residue H249 participates in Zn(2+) binding. Q252 provides a ligand contact to 4-imidazolone-5-propanoate. D324 serves as a coordination point for Fe(3+). D324 contributes to the Zn(2+) binding site. 2 residues coordinate N-formimidoyl-L-glutamate: N326 and G328. T329 contacts 4-imidazolone-5-propanoate.

The protein belongs to the metallo-dependent hydrolases superfamily. HutI family. Zn(2+) is required as a cofactor. It depends on Fe(3+) as a cofactor.

It is found in the cytoplasm. The catalysed reaction is 4-imidazolone-5-propanoate + H2O = N-formimidoyl-L-glutamate. It participates in amino-acid degradation; L-histidine degradation into L-glutamate; N-formimidoyl-L-glutamate from L-histidine: step 3/3. Catalyzes the hydrolytic cleavage of the carbon-nitrogen bond in imidazolone-5-propanoate to yield N-formimidoyl-L-glutamate. It is the third step in the universal histidine degradation pathway. This chain is Imidazolonepropionase, found in Colwellia psychrerythraea (strain 34H / ATCC BAA-681) (Vibrio psychroerythus).